The sequence spans 390 residues: Matrix metalloproteinase-23 (390 aa).

At 1 to 19 the chain is on the cytoplasmic side; the sequence is MGRGARVPSEAPGAGVERR. The propeptide occupies 1–78; the sequence is MGRGARVPSE…PGPLAPRRRR (78 aa). The helical; Signal-anchor for type II membrane protein transmembrane segment at 20–40 threads the bilayer; it reads WLGAALVALCLLPALVLLARL. At 41 to 390 the chain is on the lumenal side; the sequence is GAPAVPAWSA…TYSWRVRVRG (350 aa). Residues Asn92 and Asn148 are each glycosylated (N-linked (GlcNAc...) asparagine). Residue His211 coordinates Zn(2+). The active site involves Glu212. Residues His215 and His221 each coordinate Zn(2+). The N-linked (GlcNAc...) asparagine glycan is linked to Asn232. The ShKT domain maps to 255 to 289; the sequence is CLDRLFVCASWARRGFCDARRRLMKRLCPSSCDFC. 3 cysteine pairs are disulfide-bonded: Cys255–Cys289, Cys262–Cys282, and Cys271–Cys286. Residues 295 to 380 form the Ig-like C2-type domain; it reads PTVATTPPPP…VVRRQQRVLT (86 aa). A glycan (N-linked (GlcNAc...) asparagine) is linked at Asn316. Cys321 and Cys370 are joined by a disulfide.

Belongs to the peptidase M10A family. Zn(2+) is required as a cofactor. Post-translationally, N-glycosylated. Proteolytic cleavage might yield an active form. In terms of tissue distribution, predominantly expressed in ovary, testis and prostate.

The protein resides in the endoplasmic reticulum membrane. Its subcellular location is the membrane. Inhibited by TIMP2. Its function is as follows. Protease. May regulate the surface expression of some potassium channels by retaining them in the endoplasmic reticulum. This is Matrix metalloproteinase-23 (MMP23B) from Homo sapiens (Human).